Reading from the N-terminus, the 206-residue chain is Ribosomal RNA large subunit methyltransferase E (206 aa).

S-adenosyl-L-methionine contacts are provided by glycine 60, tryptophan 62, aspartate 80, aspartate 96, and aspartate 121. Catalysis depends on lysine 161, which acts as the Proton acceptor.

It belongs to the class I-like SAM-binding methyltransferase superfamily. RNA methyltransferase RlmE family.

It is found in the cytoplasm. It catalyses the reaction uridine(2552) in 23S rRNA + S-adenosyl-L-methionine = 2'-O-methyluridine(2552) in 23S rRNA + S-adenosyl-L-homocysteine + H(+). Specifically methylates the uridine in position 2552 of 23S rRNA at the 2'-O position of the ribose in the fully assembled 50S ribosomal subunit. The polypeptide is Ribosomal RNA large subunit methyltransferase E (Legionella pneumophila (strain Lens)).